A 653-amino-acid polypeptide reads, in one-letter code: Zinc finger CCCH domain-containing protein 54 (653 aa).

The segment at 242–261 is disordered; that stretch reads NGGGGGGGSPARARRSNGLS. The segment at 260-287 adopts a C3H1-type zinc-finger fold; sequence LSTRRPCHYFSKGICKNGQNCHYSHHQV. The HTH OST-type domain occupies 313-396; that stretch reads SLETLEMEIT…GQHSVVLAED (84 aa). The 76-residue stretch at 422 to 497 folds into the RRM domain; sequence HQIYLTFPAE…SRVLVKPYRE (76 aa). The stretch at 537 to 565 forms a coiled coil; the sequence is RLMRKQLAEKREMLLEMERRRATVRRLES. Positions 598 to 623 are disordered; sequence PSLASPDPLEIVSNSQAPPTQAGNIY. Positions 609–620 are enriched in polar residues; sequence VSNSQAPPTQAG.

The protein is Zinc finger CCCH domain-containing protein 54 of Oryza sativa subsp. japonica (Rice).